The chain runs to 225 residues: Sugar fermentation stimulation protein homolog (225 aa).

It belongs to the SfsA family.

This Sulfurisphaera tokodaii (strain DSM 16993 / JCM 10545 / NBRC 100140 / 7) (Sulfolobus tokodaii) protein is Sugar fermentation stimulation protein homolog.